We begin with the raw amino-acid sequence, 302 residues long: Probable histone acetyltransferase Rv0428c (302 aa).

The catalysed reaction is L-lysyl-[histone] + acetyl-CoA = N(6)-acetyl-L-lysyl-[histone] + CoA + H(+). In terms of biological role, shows histone acetyl transferase (HAT) activity with recombinant eukaryotic H3 histone expressed in bacteria as substrate and acetyl-CoA as donor. May be involved in survival under stress conditions. The protein is Probable histone acetyltransferase Rv0428c of Mycobacterium tuberculosis (strain ATCC 25618 / H37Rv).